The sequence spans 184 residues: MAKYNEKELADTSKFLSFVLRHKPEAIGIVLDREGWADIDKLILCAQKAGKRLTRTLLDTVVATSDKKRFSYSSDGRCIRAVQGHSTSQVAISFAEKTPPQFLYHGTASRFLDEIKKQGLIAGERHYVHLSADEATARKVGARHGSPVILTVKAQEMAKRGIPFWQAENGVWLTSTVAVEFLEW.

The protein belongs to the KptA/TPT1 family.

Its function is as follows. Removes the 2'-phosphate from RNA via an intermediate in which the phosphate is ADP-ribosylated by NAD followed by a presumed transesterification to release the RNA and generate ADP-ribose 1''-2''-cyclic phosphate (APPR&gt;P). May function as an ADP-ribosylase. In Escherichia coli O9:H4 (strain HS), this protein is Probable RNA 2'-phosphotransferase.